We begin with the raw amino-acid sequence, 319 residues long: Protease HtpX homolog (319 aa).

A run of 2 helical transmembrane segments spans residues 3–23 (LTVLALIGGYIVVLGVAAWAL) and 32–52 (TGVAFMLSLLALAMVLVQWLF). Histidine 134 contacts Zn(2+). Glutamate 135 is an active-site residue. Histidine 138 contributes to the Zn(2+) binding site. The next 2 membrane-spanning stretches (helical) occupy residues 146-166 (VILALSLIPIAAFLIGRTLVW) and 182-202 (MALVAVGAALLAAGMVFQLIV). Glutamate 210 lines the Zn(2+) pocket.

The protein belongs to the peptidase M48B family. Zn(2+) is required as a cofactor.

It is found in the cell membrane. The protein is Protease HtpX homolog of Aeropyrum pernix (strain ATCC 700893 / DSM 11879 / JCM 9820 / NBRC 100138 / K1).